The primary structure comprises 520 residues: Transposase for insertion sequence element IS21-like (520 aa).

The region spanning 13 to 78 is the HTH IS21-type domain; that stretch reads YMWYKVRELQ…KYEEYVRGTL (66 aa). The Integrase catalytic domain occupies 136-312; the sequence is LPETPYGEYA…VPSEEFAVEK (177 aa).

Belongs to the transposase IS21/IS408/IS1162 family.

Functionally, involved in the transposition of the insertion sequence. The polypeptide is Transposase for insertion sequence element IS21-like (tnpA) (Bacteroides fragilis).